A 496-amino-acid polypeptide reads, in one-letter code: Glycerol kinase 2 (496 aa).

Residue Thr-11 participates in ADP binding. The ATP site is built by Thr-11, Thr-12, and Ser-13. Residue Thr-11 coordinates sn-glycerol 3-phosphate. ADP is bound at residue Arg-15. Sn-glycerol 3-phosphate contacts are provided by Arg-81, Glu-82, Tyr-133, and Asp-242. Glycerol is bound by residues Arg-81, Glu-82, Tyr-133, Asp-242, and Gln-243. Residues Thr-264 and Gly-307 each contribute to the ADP site. ATP contacts are provided by Thr-264, Gly-307, Gln-311, and Gly-408. ADP-binding residues include Gly-408 and Asn-412.

It belongs to the FGGY kinase family.

It carries out the reaction glycerol + ATP = sn-glycerol 3-phosphate + ADP + H(+). It functions in the pathway polyol metabolism; glycerol degradation via glycerol kinase pathway; sn-glycerol 3-phosphate from glycerol: step 1/1. Inhibited by fructose 1,6-bisphosphate (FBP). Functionally, key enzyme in the regulation of glycerol uptake and metabolism. Catalyzes the phosphorylation of glycerol to yield sn-glycerol 3-phosphate. The protein is Glycerol kinase 2 of Thermotoga maritima (strain ATCC 43589 / DSM 3109 / JCM 10099 / NBRC 100826 / MSB8).